We begin with the raw amino-acid sequence, 391 residues long: Alanine racemase (391 aa).

Catalysis depends on lysine 38, which acts as the Proton acceptor; specific for D-alanine. Lysine 38 carries the post-translational modification N6-(pyridoxal phosphate)lysine. Arginine 136 is a binding site for substrate. The Proton acceptor; specific for L-alanine role is filled by tyrosine 267. Residue methionine 315 participates in substrate binding.

It belongs to the alanine racemase family. It depends on pyridoxal 5'-phosphate as a cofactor.

It catalyses the reaction L-alanine = D-alanine. The protein operates within amino-acid biosynthesis; D-alanine biosynthesis; D-alanine from L-alanine: step 1/1. Catalyzes the interconversion of L-alanine and D-alanine. May also act on other amino acids. The protein is Alanine racemase (alr) of Clostridium kluyveri (strain ATCC 8527 / DSM 555 / NBRC 12016 / NCIMB 10680 / K1).